The sequence spans 140 residues: HTH-type transcriptional regulator AdhR (140 aa).

In terms of domain architecture, HTH merR-type spans 1–69 (MNIAQVAKQF…IEALIEYTTL (69 aa)). Residues 3-22 (IAQVAKQFGLTAATLRYYER) constitute a DNA-binding region (H-T-H motif). Positions 75 to 125 (RTVEARKNILADERQRLIEKRKEIDETIKRLDTKIKDYDGKLRENEAKLKS) form a coiled coil. The tract at residues 120–140 (EAKLKSRPKTESLHGSVEQRR) is disordered.

Functionally, transcriptional regulator involved in the response to aldehyde stress. Binds to the promoter region of the adhA-yraA operon, the yraC and its own promoter region; binding is unchanged in the presence of aldehydes. This Bacillus subtilis (strain 168) protein is HTH-type transcriptional regulator AdhR (adhR).